The sequence spans 638 residues: Chaperone protein HtpG (638 aa).

Residues 1–328 are a; substrate-binding; sequence MGDVEELKFS…SSDLPLNISR (328 aa). Residues 329–558 form a b region; the sequence is ETLQNNMVIE…EHALDIRMER (230 aa). The tract at residues 484–508 is disordered; sequence LEKFTEGDDQQSTKKKKEKKDTDDA. The interval 559–638 is c; that stretch reads FLREQKQLSY…NQVLARLFKK (80 aa).

This sequence belongs to the heat shock protein 90 family. Homodimer.

It is found in the cytoplasm. In terms of biological role, molecular chaperone. Has ATPase activity. The polypeptide is Chaperone protein HtpG (Anaplasma marginale (strain St. Maries)).